The sequence spans 304 residues: Probable porphobilinogen deaminase (304 aa).

Residue C240 is modified to S-(dipyrrolylmethanemethyl)cysteine.

This sequence belongs to the HMBS family. Requires dipyrromethane as cofactor.

The catalysed reaction is 4 porphobilinogen + H2O = hydroxymethylbilane + 4 NH4(+). The protein operates within porphyrin-containing compound metabolism; protoporphyrin-IX biosynthesis; coproporphyrinogen-III from 5-aminolevulinate: step 2/4. Functionally, tetrapolymerization of the monopyrrole PBG into the hydroxymethylbilane pre-uroporphyrinogen in several discrete steps. In Ignicoccus hospitalis (strain KIN4/I / DSM 18386 / JCM 14125), this protein is Probable porphobilinogen deaminase.